The following is a 504-amino-acid chain: E3 ubiquitin-protein ligase dbl4 (504 aa).

The tract at residues 127–338 (HEGTCEICYD…NNWYTCNRYE (212 aa)) is TRIAD supradomain. Residues cysteine 131, cysteine 134, cysteine 147, histidine 149, cysteine 152, cysteine 155, cysteine 173, cysteine 178, cysteine 217, cysteine 222, cysteine 244, cysteine 246, cysteine 251, cysteine 254, histidine 259, cysteine 264, cysteine 291, and cysteine 294 each contribute to the Zn(2+) site. The RING-type 1 zinc-finger motif lies at 131-178 (CEICYDEGCLPFFSAECDHEFCLACYRQYLDSRISEGESVIQCPEESC). The IBR-type zinc finger occupies 197 to 264 (DRYHRLLDRS…GHDNHQPTIC (68 aa)). An RING-type 2; atypical zinc finger spans residues 291-320 (CPKCSTTIEKNGGCNHMTCKKCKYEFCWVC). Residue cysteine 304 is part of the active site. Zn(2+) contacts are provided by cysteine 309, cysteine 312, cysteine 317, cysteine 320, histidine 327, and cysteine 334.

Belongs to the RBR family.

The protein resides in the cytoplasm. It localises to the nucleus. It carries out the reaction [E2 ubiquitin-conjugating enzyme]-S-ubiquitinyl-L-cysteine + [acceptor protein]-L-lysine = [E2 ubiquitin-conjugating enzyme]-L-cysteine + [acceptor protein]-N(6)-ubiquitinyl-L-lysine.. Its pathway is protein modification; protein ubiquitination. In terms of biological role, probable ubiquitin-protein ligase involved in the degradation-related ubiquitination of histones. Contributes to the post-translational regulation of histone protein levels by polyubiquitination of excess histones for subsequent degradation. The protein is E3 ubiquitin-protein ligase dbl4 of Schizosaccharomyces pombe (strain 972 / ATCC 24843) (Fission yeast).